Consider the following 293-residue polypeptide: Triplex capsid protein 2 (293 aa).

The protein belongs to the herpesviridae TRX2 protein family. Interacts with TRX1 and major capisd protein/MCP.

Its subcellular location is the virion. It is found in the host nucleus. Functionally, structural component of the T=16 icosahedral capsid. The capsid is composed of pentamers and hexamers of major capsid protein/MCP, which are linked together by heterotrimers called triplexes. These triplexes are formed by a single molecule of triplex protein 1/TRX1 and two copies of triplex protein 2/TRX2. Additionally, TRX1 is required for efficient transport of TRX2 to the nucleus, which is the site of capsid assembly. This Homo sapiens (Human) protein is Triplex capsid protein 2.